Reading from the N-terminus, the 132-residue chain is Small ribosomal subunit protein uS8 (132 aa).

It belongs to the universal ribosomal protein uS8 family. Part of the 30S ribosomal subunit. Contacts proteins S5 and S12.

Functionally, one of the primary rRNA binding proteins, it binds directly to 16S rRNA central domain where it helps coordinate assembly of the platform of the 30S subunit. The polypeptide is Small ribosomal subunit protein uS8 (Bacillus mycoides (strain KBAB4) (Bacillus weihenstephanensis)).